The sequence spans 340 residues: Holliday junction branch migration complex subunit RuvB (340 aa).

The segment at 1-183 (MKRDDLVSPE…FGISFRLDYY (183 aa)) is large ATPase domain (RuvB-L). ATP-binding positions include Leu-22, Arg-23, Gly-64, Lys-67, Thr-68, Thr-69, 130 to 132 (EDF), Arg-173, Tyr-183, and Arg-220. Thr-68 is a Mg(2+) binding site. Positions 184–254 (AVEELTKIIN…VAVHALEMLE (71 aa)) are small ATPAse domain (RuvB-S). The head domain (RuvB-H) stretch occupies residues 257–340 (DRGFDQMDRS…KFEVGQKELF (84 aa)). Positions 312 and 317 each coordinate DNA.

The protein belongs to the RuvB family. In terms of assembly, homohexamer. Forms an RuvA(8)-RuvB(12)-Holliday junction (HJ) complex. HJ DNA is sandwiched between 2 RuvA tetramers; dsDNA enters through RuvA and exits via RuvB. An RuvB hexamer assembles on each DNA strand where it exits the tetramer. Each RuvB hexamer is contacted by two RuvA subunits (via domain III) on 2 adjacent RuvB subunits; this complex drives branch migration. In the full resolvosome a probable DNA-RuvA(4)-RuvB(12)-RuvC(2) complex forms which resolves the HJ.

Its subcellular location is the cytoplasm. The enzyme catalyses ATP + H2O = ADP + phosphate + H(+). In terms of biological role, the RuvA-RuvB-RuvC complex processes Holliday junction (HJ) DNA during genetic recombination and DNA repair, while the RuvA-RuvB complex plays an important role in the rescue of blocked DNA replication forks via replication fork reversal (RFR). RuvA specifically binds to HJ cruciform DNA, conferring on it an open structure. The RuvB hexamer acts as an ATP-dependent pump, pulling dsDNA into and through the RuvAB complex. RuvB forms 2 homohexamers on either side of HJ DNA bound by 1 or 2 RuvA tetramers; 4 subunits per hexamer contact DNA at a time. Coordinated motions by a converter formed by DNA-disengaged RuvB subunits stimulates ATP hydrolysis and nucleotide exchange. Immobilization of the converter enables RuvB to convert the ATP-contained energy into a lever motion, pulling 2 nucleotides of DNA out of the RuvA tetramer per ATP hydrolyzed, thus driving DNA branch migration. The RuvB motors rotate together with the DNA substrate, which together with the progressing nucleotide cycle form the mechanistic basis for DNA recombination by continuous HJ branch migration. Branch migration allows RuvC to scan DNA until it finds its consensus sequence, where it cleaves and resolves cruciform DNA. The polypeptide is Holliday junction branch migration complex subunit RuvB (Syntrophus aciditrophicus (strain SB)).